The primary structure comprises 296 residues: Pre-mRNA-splicing factor CWC23 (296 aa).

In terms of domain architecture, J spans 14 to 86; it reads DLYKLLELNY…AKKAEYDQWV (73 aa).

It belongs to the DnaJ family. In terms of assembly, associated with the spliceosome.

It is found in the cytoplasm. Its subcellular location is the nucleus. Functionally, involved in pre-mRNA splicing. May be involved in endoplasmic reticulum-associated protein degradation (ERAD) and required for growth at low and high temperatures. The protein is Pre-mRNA-splicing factor CWC23 (CWC23) of Candida glabrata (strain ATCC 2001 / BCRC 20586 / JCM 3761 / NBRC 0622 / NRRL Y-65 / CBS 138) (Yeast).